Reading from the N-terminus, the 1720-residue chain is 182 kDa tankyrase-1-binding protein (1720 aa).

The segment at 1-137 (MKGSTLREGT…PPLTPPARCA (137 aa)) is disordered. Serine 14 is modified (phosphoserine). Over residues 117–127 (SGKEDAGKEDL) the composition is skewed to basic and acidic residues. A Phosphothreonine modification is found at threonine 131. Phosphoserine is present on residues serine 178 and serine 220. Disordered regions lie at residues 185–472 (SRLT…ESNW) and 485–595 (RPSG…EDQE). The segment at 209 to 1563 (EEDSKSPAKG…TEILDSAMYR (1355 aa)) is acidic. The segment covering 232–243 (QEEHSKTPEERN) has biased composition (basic and acidic residues). Threonine 238 is subject to Phosphothreonine. Residues 266 to 287 (VSKTWVTSSADPVSEHGGSTSA) are compositionally biased toward polar residues. Phosphoserine is present on residues serine 286 and serine 300. Low complexity predominate over residues 296–316 (PASESPRLSSRPSSPCHSQLS). A compositionally biased stretch (polar residues) spans 317-327 (ETQSPAASEAS). 2 positions are modified to phosphoserine: serine 429 and serine 437. Residues 449-459 (TLPQGQGSQSA) show a composition bias toward polar residues. 2 positions are modified to phosphoserine: serine 496 and serine 500. The segment covering 502-518 (ITEASEAAEAAEADSWA) has biased composition (low complexity). Phosphothreonine occurs at positions 503 and 533. Phosphoserine occurs at positions 539, 568, 602, 673, 692, and 713. Disordered stretches follow at residues 659–720 (TTLP…CSEG), 734–924 (GVAT…EFEK), and 955–1081 (SGGG…GWAG). Residues 742–758 (SSFGSSSWSQDTSQNYS) show a composition bias toward low complexity. Residues serine 763, serine 796, serine 807, serine 845, serine 866, serine 871, serine 876, serine 887, serine 912, serine 976, serine 980, serine 1006, serine 1017, and serine 1022 each carry the phosphoserine modification. A compositionally biased stretch (basic and acidic residues) spans 840-866 (FGKRESQDPHSIHDKELQDQEFGKRDS). The span at 991-1014 (FEKKTPVGEDRFCEASRDVGHLEE) shows a compositional bias: basic and acidic residues. The span at 1027–1039 (HSRDGAARPKDEG) shows a compositional bias: basic and acidic residues. Phosphoserine is present on residues serine 1047, serine 1063, serine 1084, serine 1096, serine 1126, serine 1131, serine 1171, serine 1212, serine 1241, and serine 1246. The disordered stretch occupies residues 1128 to 1153 (AGLSPSRKSGGGHFVPPGETKAGAVD). Positions 1198-1255 (LARRLGTGESEEPRSLGVGEKDWTSSVEARNRDLPGQAEVGRHSQARESGVGEPDWSG) are disordered. Over residues 1208-1230 (EEPRSLGVGEKDWTSSVEARNRD) the composition is skewed to basic and acidic residues. Threonine 1275 bears the Phosphothreonine mark. A phosphoserine mark is found at serine 1290, serine 1321, serine 1324, serine 1373, and serine 1375. The tract at residues 1358-1546 (GRVGPDLELD…RGLLPSCPSE (189 aa)) is disordered. The segment covering 1402 to 1411 (EDSSSPSFET) has biased composition (polar residues). Serine 1425, serine 1429, serine 1437, serine 1440, serine 1442, serine 1463, and serine 1466 each carry phosphoserine. Residues 1428-1457 (ASPSSCLTRSPPSGSQSLLEGIMTASSSKG) show a composition bias toward polar residues. A tankyrase-binding region spans residues 1440-1532 (SGSQSLLEGI…QNEQASAPPP (93 aa)). A compositionally biased stretch (low complexity) spans 1477 to 1489 (LAAGAGQGEPQEP). A Phosphoserine modification is found at serine 1496. A compositionally biased stretch (polar residues) spans 1515-1527 (WSLTGAARQNEQA). A Phosphoserine modification is found at serine 1549. Threonine 1554 is subject to Phosphothreonine. Positions 1567 to 1720 (NLGRKRGHRA…QALKLKKKKI (154 aa)) are disordered. The span at 1568–1577 (LGRKRGHRAP) shows a compositional bias: basic residues. Over residues 1593-1606 (SDTRLFQDSTEPRA) the composition is skewed to basic and acidic residues. 3 positions are modified to phosphoserine: serine 1611, serine 1612, and serine 1622. Residues 1620 to 1626 (PQSRRTR) carry the Nuclear localization signal motif. Lysine 1635 carries the post-translational modification N6-methyllysine. Residues serine 1643 and serine 1657 each carry the phosphoserine modification. Residues 1656 to 1670 (RSAEEGEVTESKSSQ) are compositionally biased toward basic and acidic residues. Residues 1671 to 1690 (KESSVQRSKSCKVPGLGKPL) show a composition bias toward low complexity. Residue serine 1706 is modified to Phosphoserine. Positions 1714-1719 (KLKKKK) match the Nuclear localization signal motif.

In terms of assembly, binds to the ANK repeat domain of TNKS1 and TNKS2. In terms of processing, ADP-ribosylated by TNKS1.

The protein localises to the nucleus. It is found in the cytoplasm. The protein resides in the cytoskeleton. Its subcellular location is the chromosome. This Mus musculus (Mouse) protein is 182 kDa tankyrase-1-binding protein (Tnks1bp1).